Here is a 1415-residue protein sequence, read N- to C-terminus: DNA-directed RNA polymerase subunit beta' (1415 aa).

Zn(2+) contacts are provided by Cys72, Cys74, Cys87, and Cys90. Residues Asp463, Asp465, and Asp467 each contribute to the Mg(2+) site. Residues Cys811, Cys885, Cys892, and Cys895 each contribute to the Zn(2+) site.

It belongs to the RNA polymerase beta' chain family. The RNAP catalytic core consists of 2 alpha, 1 beta, 1 beta' and 1 omega subunit. When a sigma factor is associated with the core the holoenzyme is formed, which can initiate transcription. Mg(2+) serves as cofactor. Requires Zn(2+) as cofactor.

It catalyses the reaction RNA(n) + a ribonucleoside 5'-triphosphate = RNA(n+1) + diphosphate. Functionally, DNA-dependent RNA polymerase catalyzes the transcription of DNA into RNA using the four ribonucleoside triphosphates as substrates. The sequence is that of DNA-directed RNA polymerase subunit beta' from Cereibacter sphaeroides (strain ATCC 17023 / DSM 158 / JCM 6121 / CCUG 31486 / LMG 2827 / NBRC 12203 / NCIMB 8253 / ATH 2.4.1.) (Rhodobacter sphaeroides).